A 511-amino-acid chain; its full sequence is 60 kDa neurofilament protein (511 aa).

Residues 1 to 32 (MSVTQKKTEISTTTTYEGESRPSSGMSGFSYS) are disordered. Residues 1-99 (MSVTQKKTEI…KANREREKQD (99 aa)) form a head region. Residues 21-30 (RPSSGMSGFS) are compositionally biased toward polar residues. The region spanning 96–449 (EKQDMRDLNE…KLLEGEESRV (354 aa)) is the IF rod domain. The segment at 100-135 (MRDLNERFANYIEKVRFLEAQNKKLAGELEELKSKW) is coil 1A. The segment at 136–145 (GKETSAIKEM) is linker 1. A coil 1B region spans residues 146–284 (YETELEEARK…VHAQELKELA (139 aa)). Residues 285–303 (ALAYRDTTAENREFWRNEL) form a linker 12 region. A coil 2 region spans residues 304–449 (AQAIRDIQQE…KLLEGEESRV (146 aa)). Residues 450–511 (GMKQIVEQVV…EEKKSMGSSD (62 aa)) form a tail region. Positions 479 to 511 (GYEATGGITTTTTTSSQERRSMSEEKKSMGSSD) are disordered. Low complexity predominate over residues 483 to 492 (TGGITTTTTT). The span at 495–511 (QERRSMSEEKKSMGSSD) shows a compositional bias: basic and acidic residues.

This sequence belongs to the intermediate filament family.

Functionally, major squid neurofilament protein. The sequence is that of 60 kDa neurofilament protein from Doryteuthis pealeii (Longfin inshore squid).